The following is a 259-amino-acid chain: Ubiquinone/menaquinone biosynthesis C-methyltransferase UbiE (259 aa).

S-adenosyl-L-methionine contacts are provided by residues Thr82, Asp103, 131–132 (NA), and Ser148.

Belongs to the class I-like SAM-binding methyltransferase superfamily. MenG/UbiE family.

It carries out the reaction a 2-demethylmenaquinol + S-adenosyl-L-methionine = a menaquinol + S-adenosyl-L-homocysteine + H(+). The catalysed reaction is a 2-methoxy-6-(all-trans-polyprenyl)benzene-1,4-diol + S-adenosyl-L-methionine = a 5-methoxy-2-methyl-3-(all-trans-polyprenyl)benzene-1,4-diol + S-adenosyl-L-homocysteine + H(+). Its pathway is quinol/quinone metabolism; menaquinone biosynthesis; menaquinol from 1,4-dihydroxy-2-naphthoate: step 2/2. The protein operates within cofactor biosynthesis; ubiquinone biosynthesis. In terms of biological role, methyltransferase required for the conversion of demethylmenaquinol (DMKH2) to menaquinol (MKH2) and the conversion of 2-polyprenyl-6-methoxy-1,4-benzoquinol (DDMQH2) to 2-polyprenyl-3-methyl-6-methoxy-1,4-benzoquinol (DMQH2). The protein is Ubiquinone/menaquinone biosynthesis C-methyltransferase UbiE of Haemophilus ducreyi (strain 35000HP / ATCC 700724).